The following is a 263-amino-acid chain: Type III pantothenate kinase (263 aa).

Residue 14 to 21 (DIGNTSVN) coordinates ATP. A substrate-binding site is contributed by 115–118 (GADR). Aspartate 117 serves as the catalytic Proton acceptor. Position 137 (aspartate 137) interacts with K(+). Threonine 140 contacts ATP. Residue threonine 192 coordinates substrate.

The protein belongs to the type III pantothenate kinase family. In terms of assembly, homodimer. The cofactor is NH4(+). It depends on K(+) as a cofactor.

It localises to the cytoplasm. The enzyme catalyses (R)-pantothenate + ATP = (R)-4'-phosphopantothenate + ADP + H(+). Its pathway is cofactor biosynthesis; coenzyme A biosynthesis; CoA from (R)-pantothenate: step 1/5. Catalyzes the phosphorylation of pantothenate (Pan), the first step in CoA biosynthesis. In Dehalococcoides mccartyi (strain ATCC BAA-2100 / JCM 16839 / KCTC 5957 / BAV1), this protein is Type III pantothenate kinase.